Reading from the N-terminus, the 683-residue chain is Methionine--tRNA ligase (683 aa).

Residues 15–25 (PYANGPIHLGH) carry the 'HIGH' region motif. The Zn(2+) site is built by Cys-146, Cys-149, Cys-159, and Cys-162. The short motif at 332–336 (KMSKS) is the 'KMSKS' region element. Lys-335 lines the ATP pocket. The region spanning 581 to 683 (DFFKVDLRVA…AGAKAGQRVK (103 aa)) is the tRNA-binding domain.

Belongs to the class-I aminoacyl-tRNA synthetase family. MetG type 1 subfamily. As to quaternary structure, homodimer. Requires Zn(2+) as cofactor.

The protein resides in the cytoplasm. The enzyme catalyses tRNA(Met) + L-methionine + ATP = L-methionyl-tRNA(Met) + AMP + diphosphate. Functionally, is required not only for elongation of protein synthesis but also for the initiation of all mRNA translation through initiator tRNA(fMet) aminoacylation. In Histophilus somni (strain 129Pt) (Haemophilus somnus), this protein is Methionine--tRNA ligase.